The following is a 207-amino-acid chain: Large ribosomal subunit protein uL4 (207 aa).

The interval alanine 49–alanine 73 is disordered.

The protein belongs to the universal ribosomal protein uL4 family. As to quaternary structure, part of the 50S ribosomal subunit.

Its function is as follows. One of the primary rRNA binding proteins, this protein initially binds near the 5'-end of the 23S rRNA. It is important during the early stages of 50S assembly. It makes multiple contacts with different domains of the 23S rRNA in the assembled 50S subunit and ribosome. Functionally, forms part of the polypeptide exit tunnel. The sequence is that of Large ribosomal subunit protein uL4 from Helicobacter hepaticus (strain ATCC 51449 / 3B1).